Reading from the N-terminus, the 293-residue chain is Calcium uniporter protein 2, mitochondrial (293 aa).

The N-terminal 33 residues, methionine 1–leucine 33, are a transit peptide targeting the mitochondrion. Residues isoleucine 168 to phenylalanine 188 form a helical membrane-spanning segment. The Selectivity filter signature appears at tryptophan 193–phenylalanine 201. Glutamate 197 serves as a coordination point for Ca(2+). Residues proline 198–threonine 218 traverse the membrane as a helical segment.

This sequence belongs to the MCU (TC 1.A.77) family.

Its subcellular location is the mitochondrion inner membrane. The catalysed reaction is Ca(2+)(in) = Ca(2+)(out). Mitochondrial inner membrane calcium uniporter that mediates calcium uptake into mitochondria. Constitutes a pore-forming and calcium-conducting subunit. Mitochondrial calcium homeostasis plays key roles in cellular physiology and regulates cell bioenergetics, cytoplasmic calcium signals and activation of cell death pathways. This Arabidopsis thaliana (Mouse-ear cress) protein is Calcium uniporter protein 2, mitochondrial.